The sequence spans 770 residues: Arf-GAP with coiled-coil, ANK repeat and PH domain-containing protein 2 (770 aa).

Positions 1–226 (MKMTVDFEEC…MKDLGAQLDR (226 aa)) constitute a BAR domain. One can recognise a PH domain in the interval 266-361 (GIVMEGYLFK…WIKAVQTSIA (96 aa)). The segment at 371–391 (SEKLDKKSSPSTGSLDSGNES) is disordered. Over residues 379-388 (SPSTGSLDSG) the composition is skewed to polar residues. A phosphoserine mark is found at Ser384 and Ser387. An Arf-GAP domain is found at 399 to 520 (ESALQRVQCI…KFVDKYSALL (122 aa)). Residues 414–437 (CCDCGLADPRWASINLGITLCIEC) form a C4-type zinc finger. Ser521 carries the post-translational modification Phosphoserine. The disordered stretch occupies residues 542–572 (ARASVHTPVKSNDSGIQQCSEDGRESLPSTV). A compositionally biased stretch (polar residues) spans 550-561 (VKSNDSGIQQCS). Residues Ser573 and Ser576 each carry the phosphoserine modification. ANK repeat units follow at residues 632 to 661 (NQAT…NVNQ), 665 to 694 (QGRG…NQHA), and 698 to 727 (EGKD…NEEM). Residue Tyr734 is modified to Phosphotyrosine. A Phosphoserine modification is found at Ser767.

Interacts with RAB35 (GTP-bound form); the interaction is direct and probably recruits ACAP2 to membranes. Interacts with MICALL1; the interaction is indirect through RAB35.

It localises to the endosome membrane. It is found in the cell membrane. GAP activity stimulated by phosphatidylinositol 4,5-bisphosphate (PIP2) and phosphatidic acid. In terms of biological role, GTPase-activating protein (GAP) for ADP ribosylation factor 6 (ARF6). Doesn't show GAP activity for RAB35. The polypeptide is Arf-GAP with coiled-coil, ANK repeat and PH domain-containing protein 2 (Acap2) (Mus musculus (Mouse)).